The sequence spans 491 residues: Glutamate--tRNA ligase (491 aa).

The 'HIGH' region motif lies at 12–22 (PSPTGTPHVGL). The interval 111 to 134 (STPEEVEERHKAAGRDPKLGYDNF) is disordered. The segment covering 117–134 (EERHKAAGRDPKLGYDNF) has biased composition (basic and acidic residues). Residues 256 to 260 (KLSKR) carry the 'KMSKS' region motif. An ATP-binding site is contributed by K259.

Belongs to the class-I aminoacyl-tRNA synthetase family. Glutamate--tRNA ligase type 1 subfamily. In terms of assembly, monomer.

The protein localises to the cytoplasm. The catalysed reaction is tRNA(Glu) + L-glutamate + ATP = L-glutamyl-tRNA(Glu) + AMP + diphosphate. Functionally, catalyzes the attachment of glutamate to tRNA(Glu) in a two-step reaction: glutamate is first activated by ATP to form Glu-AMP and then transferred to the acceptor end of tRNA(Glu). This chain is Glutamate--tRNA ligase, found in Rhodococcus jostii (strain RHA1).